The chain runs to 203 residues: uncharacterized protein (203 aa).

Residues 1–23 (MKKIYKALISSLLLSTSINVAYA) form the signal peptide. Positions 24–87 (ETQYVTENLS…ILNSDLSSTP (64 aa)) constitute an SH3b domain. Residues 167-189 (IAIQWFIYGGSVLGVGLLFGLLI) traverse the membrane as a helical segment.

This sequence to E.coli YgiM.

It is found in the membrane. This is an uncharacterized protein from Haemophilus influenzae (strain ATCC 51907 / DSM 11121 / KW20 / Rd).